A 158-amino-acid polypeptide reads, in one-letter code: 18.1 kDa class I heat shock protein (158 aa).

One can recognise a sHSP domain in the interval 44-158 (ENPAFVSTRV…AEVKSIEISG (115 aa)).

This sequence belongs to the small heat shock protein (HSP20) family. As to quaternary structure, forms oligomeric structures.

Its subcellular location is the cytoplasm. This is 18.1 kDa class I heat shock protein (HSP18.1) from Pisum sativum (Garden pea).